The following is a 384-amino-acid chain: Anhydro-N-acetylmuramic acid kinase (384 aa).

Residue 17-24 coordinates ATP; it reads GTSMDGVD.

Belongs to the anhydro-N-acetylmuramic acid kinase family.

The catalysed reaction is 1,6-anhydro-N-acetyl-beta-muramate + ATP + H2O = N-acetyl-D-muramate 6-phosphate + ADP + H(+). Its pathway is amino-sugar metabolism; 1,6-anhydro-N-acetylmuramate degradation. The protein operates within cell wall biogenesis; peptidoglycan recycling. In terms of biological role, catalyzes the specific phosphorylation of 1,6-anhydro-N-acetylmuramic acid (anhMurNAc) with the simultaneous cleavage of the 1,6-anhydro ring, generating MurNAc-6-P. Is required for the utilization of anhMurNAc either imported from the medium or derived from its own cell wall murein, and thus plays a role in cell wall recycling. The chain is Anhydro-N-acetylmuramic acid kinase from Burkholderia thailandensis (strain ATCC 700388 / DSM 13276 / CCUG 48851 / CIP 106301 / E264).